The chain runs to 1155 residues: DNA-directed RNA polymerase subunit beta (1155 aa).

This sequence belongs to the RNA polymerase beta chain family. The RNAP catalytic core consists of 2 alpha, 1 beta, 1 beta' and 1 omega subunit. When a sigma factor is associated with the core the holoenzyme is formed, which can initiate transcription.

It catalyses the reaction RNA(n) + a ribonucleoside 5'-triphosphate = RNA(n+1) + diphosphate. Functionally, DNA-dependent RNA polymerase catalyzes the transcription of DNA into RNA using the four ribonucleoside triphosphates as substrates. The sequence is that of DNA-directed RNA polymerase subunit beta from Borrelia turicatae (strain 91E135).